Here is a 361-residue protein sequence, read N- to C-terminus: Carbamoyl phosphate synthase small chain (361 aa).

Residues Met1–Asp173 are CPSase. Residues Ser45, Gly225, and Gly227 each contribute to the L-glutamine site. Residues Glu177–His361 enclose the Glutamine amidotransferase type-1 domain. Cys252 acts as the Nucleophile in catalysis. L-glutamine is bound by residues Leu253, Gln256, Asn294, Gly296, and Phe297. Residues His337 and Glu339 contribute to the active site.

Belongs to the CarA family. Composed of two chains; the small (or glutamine) chain promotes the hydrolysis of glutamine to ammonia, which is used by the large (or ammonia) chain to synthesize carbamoyl phosphate. Tetramer of heterodimers (alpha,beta)4.

The catalysed reaction is hydrogencarbonate + L-glutamine + 2 ATP + H2O = carbamoyl phosphate + L-glutamate + 2 ADP + phosphate + 2 H(+). It catalyses the reaction L-glutamine + H2O = L-glutamate + NH4(+). It participates in amino-acid biosynthesis; L-arginine biosynthesis; carbamoyl phosphate from bicarbonate: step 1/1. It functions in the pathway pyrimidine metabolism; UMP biosynthesis via de novo pathway; (S)-dihydroorotate from bicarbonate: step 1/3. In terms of biological role, small subunit of the glutamine-dependent carbamoyl phosphate synthetase (CPSase). CPSase catalyzes the formation of carbamoyl phosphate from the ammonia moiety of glutamine, carbonate, and phosphate donated by ATP, constituting the first step of 2 biosynthetic pathways, one leading to arginine and/or urea and the other to pyrimidine nucleotides. The small subunit (glutamine amidotransferase) binds and cleaves glutamine to supply the large subunit with the substrate ammonia. The sequence is that of Carbamoyl phosphate synthase small chain from Methanopyrus kandleri (strain AV19 / DSM 6324 / JCM 9639 / NBRC 100938).